The following is a 274-amino-acid chain: Undecaprenyl-diphosphatase 1 (274 aa).

8 consecutive transmembrane segments (helical) span residues 7 to 27 (LEIFKAVILGIVQGITEWLPV), 48 to 68 (FISTFLVVIQFGSILAVLVIF), 88 to 108 (VRLWLKVIIAVIPSGVIGILF), 115 to 135 (LFFNSTVVAIALIVYGIIMIG), 151 to 171 (VTYKLALCIGLFQCLALIPGT), 189 to 209 (YVAAEFSFFLAIPTMLGASAL), 221 to 241 (FEWLILGVGSVVAFVVSIVVI), and 253 to 273 (FKVFGYYRIVLGIVVLAYFFL).

Belongs to the UppP family.

The protein resides in the cell membrane. It carries out the reaction di-trans,octa-cis-undecaprenyl diphosphate + H2O = di-trans,octa-cis-undecaprenyl phosphate + phosphate + H(+). Its function is as follows. Catalyzes the dephosphorylation of undecaprenyl diphosphate (UPP). Confers resistance to bacitracin. The chain is Undecaprenyl-diphosphatase 1 from Clostridioides difficile (strain 630) (Peptoclostridium difficile).